A 393-amino-acid polypeptide reads, in one-letter code: Protein TsgA (393 aa).

12 helical membrane passes run 11–31, 51–71, 78–98, 101–121, 134–154, 162–182, 206–226, 245–265, 273–293, 298–318, 332–352, and 361–381; these read WISFLSYALTGALVIVTGMVM, FLNAGILISIFLNAWLMEIVP, FGFILMVLAVAGLMFSHSLAL, AAMFVLGLVSGITMSIGTFLI, LLFTDSFFSMAGMIFPMVAAF, WYWVYACIGLVYLAIFILTFG, IGVLFLAVAALCYILGQLGFI, ALVSDFWMSYMFGMWAFSFIL, ILTVLAGMAAVLMYLFITGTQ, WFILTLGFFSSAIYTSIITLG, FILTCGTIGTMLTFVVTGPIV, and LLTANGLYAVVFVMCFALGFV.

The protein belongs to the major facilitator superfamily. TsgA family.

The protein localises to the cell inner membrane. This Salmonella gallinarum (strain 287/91 / NCTC 13346) protein is Protein TsgA.